Reading from the N-terminus, the 124-residue chain is Fluoride-specific ion channel FluC (124 aa).

The next 4 helical transmembrane spans lie at 5–25 (LVVFVGAGLGGALRHGVNLAA), 36–56 (TMIINIAGSLAMGLLTGWFAV), 70–90 (TGILGGFTTFSTFSLEAFLLM), and 100–120 (LYVLGSVAAGIAGVGASLAVI). Na(+) is bound by residues Gly74 and Thr77.

The protein belongs to the fluoride channel Fluc/FEX (TC 1.A.43) family.

It localises to the cell inner membrane. The catalysed reaction is fluoride(in) = fluoride(out). Its activity is regulated as follows. Na(+) is not transported, but it plays an essential structural role and its presence is essential for fluoride channel function. In terms of biological role, fluoride-specific ion channel. Important for reducing fluoride concentration in the cell, thus reducing its toxicity. This is Fluoride-specific ion channel FluC from Methylobacterium nodulans (strain LMG 21967 / CNCM I-2342 / ORS 2060).